The primary structure comprises 215 residues: Pyrrolidone-carboxylate peptidase (215 aa).

Active-site residues include Glu-78, Cys-141, and His-165.

It belongs to the peptidase C15 family. In terms of assembly, homotetramer.

The protein localises to the cytoplasm. The enzyme catalyses Release of an N-terminal pyroglutamyl group from a polypeptide, the second amino acid generally not being Pro.. Removes 5-oxoproline from various penultimate amino acid residues except L-proline. In Streptococcus suis (strain 98HAH33), this protein is Pyrrolidone-carboxylate peptidase.